Here is a 239-residue protein sequence, read N- to C-terminus: Large ribosomal subunit protein mL67 (239 aa).

This sequence belongs to the mitochondrion-specific ribosomal protein mL67 family. Component of the mitochondrial large ribosomal subunit (mt-LSU).

It localises to the nucleus. Its subcellular location is the mitochondrion. Component of the mitochondrial ribosome (mitoribosome), a dedicated translation machinery responsible for the synthesis of mitochondrial genome-encoded proteins, including at least some of the essential transmembrane subunits of the mitochondrial respiratory chain. The mitoribosomes are attached to the mitochondrial inner membrane and translation products are cotranslationally integrated into the membrane. mL67/MHR1 also has extraribosomal functions, being involved in regulation of mitochondrial DNA recombination, maintenance and repair, and generation of homoplasmic cells. mL67/MHR1 also acts as transcription factor involved in regulation of RNA polymerase II-dependent transcription. The protein is Large ribosomal subunit protein mL67 (MHR1) of Candida albicans (strain SC5314 / ATCC MYA-2876) (Yeast).